The sequence spans 2842 residues: Adenomatous polyposis coli protein (2842 aa).

Position 2 is an N-acetylalanine (Ala2). The stretch at 2 to 62 (AAASYDQLLK…GSIEDETMTS (61 aa)) forms a coiled coil. 2 positions are modified to phosphoserine: Ser105 and Ser109. A coiled-coil region spans residues 125–260 (SRESTGYLEE…ASHEAERQLE (136 aa)). Positions 238-304 (AEAERSSQSK…THSAPRRLTS (67 aa)) are disordered. The span at 239–259 (EAERSSQSKHETASHEAERQL) shows a compositional bias: basic and acidic residues. Positions 268–279 (NLATSGSGQSSA) are enriched in polar residues. 7 ARM repeats span residues 451–493 (LMKL…HYSV), 503–545 (LTNL…IASV), 546–589 (LRNL…VLSA), 590–636 (LWNL…GGGI), 637–681 (LRNV…ACGT), 682–723 (LWNL…SAAA), and 724–765 (LRNL…LDAQ). A phosphoserine mark is found at Ser742, Ser746, and Ser778. A disordered region spans residues 828 to 877 (VLPSSSSSRGSLDSSRSEKDRSLERERGIGLSTYHSATENPGTSSKRGLQ). The span at 831–841 (SSSSSRGSLDS) shows a compositional bias: low complexity. Basic and acidic residues predominate over residues 842–855 (SRSEKDRSLERERG). A compositionally biased stretch (polar residues) spans 860-877 (TYHSATENPGTSSKRGLQ). At Ser906 the chain carries Phosphoserine. Disordered stretches follow at residues 921–942 (RRSSASHTHPNTHNFAKSESSN) and 956–988 (RSSNDSLNSVTSSDGYGKRGQMKPSVESYSEDD). Over residues 931-942 (NTHNFAKSESSN) the composition is skewed to polar residues. A compositionally biased stretch (low complexity) spans 959–969 (NDSLNSVTSSD). Phosphoserine occurs at positions 985, 1036, and 1040. The interaction with catenins stretch occupies residues 1018 to 1167 (ELDTPINYSL…TNYSIKYNEE (150 aa)). Disordered stretches follow at residues 1058–1078 (IKQNEQRQSRSQNTNFPVYSE), 1092–1166 (GQQE…KYNE), 1188–1249 (SQKP…CKVP), and 1306–1373 (ENDV…PEHY). 2 stretches are compositionally biased toward polar residues: residues 1066–1078 (SRSQNTNFPVYSE) and 1103–1128 (RGTNGSETNRMGSSHAVNQNVNQSLC). The segment covering 1144-1157 (RYSEEEQHEEEERP) has biased composition (basic and acidic residues). Composition is skewed to low complexity over residues 1188 to 1200 (SQKPSFSFSKTPS) and 1209 to 1223 (NSPSSEAASAPSSNA). Composition is skewed to polar residues over residues 1224–1242 (KRQSQLHPSSAQRNGQTPK) and 1323–1340 (VSQSTRTKPSRLQASGLA). Low complexity predominate over residues 1352–1363 (SSGAKSPSKSGA). Phosphoserine is present on residues Ser1357, Ser1368, Ser1382, Ser1389, and Ser1392. Disordered stretches follow at residues 1398-1474 (IASS…VSAA), 1525-1568 (PPVQ…SDDD), 1584-1609 (KSSRKAKKLAQTASKLPPPVARKPSQ), and 1661-1711 (ESPP…IPDL). At Thr1435 the chain carries Phosphothreonine. A compositionally biased stretch (pro residues) spans 1435–1444 (TPPPPPPPQP). Positions 1532–1546 (NGNETEPEQPEESNE) are enriched in acidic residues. Residues 1547 to 1562 (NQDKEVEKPDSEKDLL) are compositionally biased toward basic and acidic residues. Ser1565 carries the post-translational modification Phosphoserine. Residues 1681 to 1700 (EFEKRDTIPTEGRSTDEAQR) are compositionally biased toward basic and acidic residues. Residue Ser1714 is modified to Phosphoserine. A compositionally biased stretch (polar residues) spans 1748 to 1762 (VQQASMTSSGTNKNQ). Disordered regions lie at residues 1748 to 1950 (VQQA…EKLQ), 1963 to 2010 (RNSS…APKS), and 2043 to 2067 (SSAMPKKRRPSRLKGEGEWQSPRKV). Phosphoserine is present on Ser1772. Basic and acidic residues-rich tracts occupy residues 1783-1792 (YRTRVRKNTD) and 1804-1833 (SDNKDSKKQSLKNNPKDLNDKLPDNEDRVR). 3 positions are modified to phosphoserine: Ser1859, Ser1861, and Ser1862. The tract at residues 1864-1891 (DFDDDDVDLSREKAELRKGKESKDSEAK) is highly charged. Over residues 1871-1894 (DLSREKAELRKGKESKDSEAKVTC) the composition is skewed to basic and acidic residues. Over residues 1899-1911 (SSSQQSARKAQAS) the composition is skewed to low complexity. The segment covering 1927-1936 (EQPTFPQSSK) has biased composition (polar residues). Residues 1937–1949 (DVPDRGAATDEKL) are compositionally biased toward basic and acidic residues. Phosphoserine is present on residues Ser1969 and Ser1971. Residues 2034 to 2058 (EDDLLRECISSAMPKKRRPSRLKGE) form an interaction with AXIN1 region. 6 positions are modified to phosphoserine: Ser2087, Ser2092, Ser2125, Ser2129, Ser2130, and Ser2132. Disordered stretches follow at residues 2148–2173 (FHLTPDQEEKPFTSHKGPRILKPGEK), 2234–2641 (PGVR…AESK), and 2664–2842 (CPIN…VTSV). Thr2151 bears the Phosphothreonine mark. Residues 2167-2674 (ILKPGEKSTL…PINNPRSGRS (508 aa)) form a basic region region. Polar residues-rich tracts occupy residues 2257–2272 (ASKSPSEGPVATTSPR) and 2283–2347 (SPIT…QLPR). Ser2260, Ser2270, and Ser2283 each carry phosphoserine. The segment covering 2348-2369 (TSSPSTASTKSSGSGKMSYTSP) has biased composition (low complexity). Polar residues-rich tracts occupy residues 2370–2411 (GRQL…NGSN) and 2418–2427 (RMSSTKSSGS). Low complexity predominate over residues 2459–2477 (SASFESLSPSSRPDSPTRS). 2 positions are modified to phosphoserine: Ser2473 and Ser2535. The interval 2475–2842 (TRSQAQTPVL…HSGSYLVTSV (368 aa)) is interaction with DLG1. Residues 2518–2535 (SDGRPSKRHDIARSHSES) are compositionally biased toward basic and acidic residues. The span at 2555–2568 (SSSLPRVSTWRRTG) shows a compositional bias: polar residues. Phosphoserine is present on Ser2569. Low complexity predominate over residues 2569-2579 (SSSSILSASSE). Over residues 2580-2592 (SSEKAKSEDEKHV) the composition is skewed to basic and acidic residues. The span at 2629–2638 (TTSSGAASGA) shows a compositional bias: low complexity. 2 stretches are compositionally biased toward polar residues: residues 2668–2679 (NPRSGRSPTGNT) and 2702–2713 (GKQSVGSGSPVQ). Phosphoserine is present on residues Ser2671 and Ser2674. An interaction with MAPRE1 region spans residues 2674 to 2842 (SPTGNTPPVI…HSGSYLVTSV (169 aa)). The residue at position 2679 (Thr2679) is a Phosphothreonine. Phosphoserine is present on residues Ser2710 and Ser2723. A compositionally biased stretch (low complexity) spans 2762-2773 (SSSSSSKHSSPS). Over residues 2783-2809 (FNYNPSPRKSSADSTSARPSQIPTPVG) the composition is skewed to polar residues. Ser2788 carries the phosphoserine modification. The Microtubule tip localization signal motif lies at 2802-2805 (SQIP). The PDZ-binding signature appears at 2840 to 2842 (TSV).

It belongs to the adenomatous polyposis coli (APC) family. In terms of assembly, forms homooligomers. Found in a complex consisting of ARHGEF4, APC and CTNNB1. Found in a complex composed of MACF1, APC, AXIN1, CTNNB1 and GSK3B. The complex composed, at least, of APC, CTNNB1 and GSK3B interacts with JPT1; the interaction requires the inactive form of GSK3B (phosphorylated at 'Ser-9'). Interacts with APC2. Interacts with DLG1 (via PDZ domains) and DLG3 (via PDZ domains). Interacts with alpha- and beta-catenins. Interacts with AXIN1 (via RGS domain). Interacts with ARHGEF4 (via N-terminus). Interacts (via C-terminal residues 2674-2843) with MAPRE1 (via C-terminal residues 206-211); the interaction inhibits association with and bundling of F-actin. Interacts with MAPRE2 and MAPRE3 (via C-terminus). Interacts with DIAPH1; DIAPH1 acts as a scaffold protein for MAPRE1 and APC to stabilize microtubules and promote cell migration. Interacts with DIAPH2. Interacts with SCRIB; may mediate APC targeting to adherens junctions of epithelial cells. Interacts with SPATA13 (via N-terminus and SH3 domain). Interacts with ASAP1 (via SH3 domain). Interacts (at the cell membrane) with AMER1 and AMER2 (via ARM repeats). Interacts with KHDRBS1. Interacts with actin; binds both to F-actin and actin filament bundles. In terms of processing, phosphorylated; phosphorylation enhances the F-actin bundling activity. Phosphorylated by GSK3B. Ubiquitinated, leading to its degradation by the proteasome. Ubiquitination is facilitated by Axin. Deubiquitinated by ZRANB1/TRABID.

Its subcellular location is the cell junction. The protein localises to the adherens junction. It localises to the cytoplasm. The protein resides in the cytoskeleton. It is found in the cell projection. Its subcellular location is the lamellipodium. The protein localises to the ruffle membrane. It localises to the cell membrane. Its function is as follows. Tumor suppressor. Promotes rapid degradation of CTNNB1 and participates in Wnt signaling as a negative regulator. APC activity is correlated with its phosphorylation state. Activates the GEF activity of SPATA13 and ARHGEF4. Plays a role in hepatocyte growth factor (HGF)-induced cell migration. Required for MMP9 up-regulation via the JNK signaling pathway in colorectal tumor cells. Associates with both microtubules and actin filaments, components of the cytoskeleton. Plays a role in mediating the organization of F-actin into ordered bundles. Functions downstream of Rho GTPases and DIAPH1 to selectively stabilize microtubules. Acts as a mediator of ERBB2-dependent stabilization of microtubules at the cell cortex. It is required for the localization of MACF1 to the cell membrane and this localization of MACF1 is critical for its function in microtubule stabilization. The sequence is that of Adenomatous polyposis coli protein (Apc) from Rattus norvegicus (Rat).